Here is a 425-residue protein sequence, read N- to C-terminus: Exodeoxyribonuclease 7 large subunit (425 aa).

The protein belongs to the XseA family. As to quaternary structure, heterooligomer composed of large and small subunits.

It is found in the cytoplasm. It carries out the reaction Exonucleolytic cleavage in either 5'- to 3'- or 3'- to 5'-direction to yield nucleoside 5'-phosphates.. Bidirectionally degrades single-stranded DNA into large acid-insoluble oligonucleotides, which are then degraded further into small acid-soluble oligonucleotides. The chain is Exodeoxyribonuclease 7 large subunit from Nocardia farcinica (strain IFM 10152).